The chain runs to 517 residues: GMP synthase [glutamine-hydrolyzing] (517 aa).

A Glutamine amidotransferase type-1 domain is found at 9–199; sequence RILILDFGSQ…VLGICGCERL (191 aa). The Nucleophile role is filled by cysteine 86. Active-site residues include histidine 173 and glutamate 175. The 193-residue stretch at 200–392 folds into the GMPS ATP-PPase domain; that stretch reads WTSESIIEDA…LGLPYEMLYR (193 aa). 227 to 233 contributes to the ATP binding site; it reads SGGVDSS.

As to quaternary structure, homodimer.

It carries out the reaction XMP + L-glutamine + ATP + H2O = GMP + L-glutamate + AMP + diphosphate + 2 H(+). It functions in the pathway purine metabolism; GMP biosynthesis; GMP from XMP (L-Gln route): step 1/1. In terms of biological role, catalyzes the synthesis of GMP from XMP. This Vibrio vulnificus (strain CMCP6) protein is GMP synthase [glutamine-hydrolyzing].